Here is a 246-residue protein sequence, read N- to C-terminus: Large ribosomal subunit protein uL3 (246 aa).

Disordered stretches follow at residues 140–162 (SHRS…NKKM) and 215–246 (DVPL…EENA). Gln151 is modified (N5-methylglutamine). Residues 234 to 246 (EAAPEAPASEENA) show a composition bias toward low complexity.

Belongs to the universal ribosomal protein uL3 family. In terms of assembly, part of the 50S ribosomal subunit. Forms a cluster with proteins L14 and L19. In terms of processing, methylated by PrmB.

In terms of biological role, one of the primary rRNA binding proteins, it binds directly near the 3'-end of the 23S rRNA, where it nucleates assembly of the 50S subunit. This is Large ribosomal subunit protein uL3 from Methylorubrum extorquens (strain PA1) (Methylobacterium extorquens).